We begin with the raw amino-acid sequence, 210 residues long: Large ribosomal subunit protein bL25 (210 aa).

Residues 179 to 210 (LPPQQEEEIHSGEQQEPGQPEAEEGRETTPEG) are disordered. The span at 201–210 (EEGRETTPEG) shows a compositional bias: basic and acidic residues.

The protein belongs to the bacterial ribosomal protein bL25 family. CTC subfamily. Part of the 50S ribosomal subunit; part of the 5S rRNA/L5/L18/L25 subcomplex. Contacts the 5S rRNA. Binds to the 5S rRNA independently of L5 and L18.

Functionally, this is one of the proteins that binds to the 5S RNA in the ribosome where it forms part of the central protuberance. The protein is Large ribosomal subunit protein bL25 of Geobacillus thermodenitrificans (strain NG80-2).